A 388-amino-acid polypeptide reads, in one-letter code: F-box/kelch-repeat protein At3g17530 (388 aa).

The F-box domain occupies 1-50 (MMISDLPHDLESEILSRVPAKSLAKWKTTCKRWYALFRDPSFVKKNFDKA). Kelch repeat units follow at residues 163-208 (CCYY…VSLK) and 336-383 (RIYI…AEEN).

The polypeptide is F-box/kelch-repeat protein At3g17530 (Arabidopsis thaliana (Mouse-ear cress)).